The following is a 273-amino-acid chain: Large ribosomal subunit protein uL2 (273 aa).

2 disordered regions span residues 28–53 (KPFA…TTRH) and 221–273 (RGTA…RRTK). The segment covering 39–48 (KSGGRNNNGR) has biased composition (low complexity).

The protein belongs to the universal ribosomal protein uL2 family. In terms of assembly, part of the 50S ribosomal subunit. Forms a bridge to the 30S subunit in the 70S ribosome.

One of the primary rRNA binding proteins. Required for association of the 30S and 50S subunits to form the 70S ribosome, for tRNA binding and peptide bond formation. It has been suggested to have peptidyltransferase activity; this is somewhat controversial. Makes several contacts with the 16S rRNA in the 70S ribosome. The chain is Large ribosomal subunit protein uL2 from Pectobacterium atrosepticum (strain SCRI 1043 / ATCC BAA-672) (Erwinia carotovora subsp. atroseptica).